The sequence spans 512 residues: Maturase K (512 aa).

Belongs to the intron maturase 2 family. MatK subfamily.

It localises to the plastid. The protein resides in the chloroplast. Usually encoded in the trnK tRNA gene intron. Probably assists in splicing its own and other chloroplast group II introns. The protein is Maturase K of Soldanella alpina (Alpine snowbell).